The chain runs to 175 residues: Nucleoside-triphosphatase THEP1 (175 aa).

ATP contacts are provided by residues 16–23 (GMPGVGKT) and 103–110 (VAFIDEIG).

Belongs to the THEP1 NTPase family.

The enzyme catalyses a ribonucleoside 5'-triphosphate + H2O = a ribonucleoside 5'-diphosphate + phosphate + H(+). In terms of biological role, has nucleotide phosphatase activity towards ATP, GTP, CTP, TTP and UTP. May hydrolyze nucleoside diphosphates with lower efficiency. In Pyrobaculum calidifontis (strain DSM 21063 / JCM 11548 / VA1), this protein is Nucleoside-triphosphatase THEP1.